We begin with the raw amino-acid sequence, 327 residues long: Leucotoxin LukDv (327 aa).

A signal peptide spans M1–A26.

This sequence belongs to the aerolysin family. In terms of assembly, toxicity requires sequential binding and synergistic association of a class S and a class F component which form heterooligomeric complexes. LukEv (class S) associates with LukDv (class F).

Its subcellular location is the secreted. Its function is as follows. Part of a bi-component leucotoxin that acts by forming pores in the membrane of the target cells. The activity of LukEv-LukDv to rabbit leukocytes is similar to that of the Panton-Valentine leucocidin (PVL). LukEv-LukDv is hemolytic to rabbit red blood cells although the activity is only 8% of gamma-hemolysin. In Staphylococcus aureus (strain NCTC 8325 / PS 47), this protein is Leucotoxin LukDv (lukDv).